Here is a 245-residue protein sequence, read N- to C-terminus: UPF0246 protein Cgl1995/cg2186 (245 aa).

This sequence belongs to the UPF0246 family.

The protein is UPF0246 protein Cgl1995/cg2186 of Corynebacterium glutamicum (strain ATCC 13032 / DSM 20300 / JCM 1318 / BCRC 11384 / CCUG 27702 / LMG 3730 / NBRC 12168 / NCIMB 10025 / NRRL B-2784 / 534).